Here is a 315-residue protein sequence, read N- to C-terminus: ADP-L-glycero-D-manno-heptose-6-epimerase (315 aa).

Residues 10 to 11 (FI), 31 to 32 (DD), Lys38, Lys53, 76 to 80 (QGACS), and Asn93 contribute to the NADP(+) site. Tyr140 serves as the catalytic Proton acceptor. NADP(+) is bound at residue Lys144. A substrate-binding site is contributed by Asn169. NADP(+) contacts are provided by Val170 and Lys178. Lys178 serves as the catalytic Proton acceptor. Substrate is bound by residues Ser180, His187, 201 to 204 (FEGC), Arg214, and Tyr278.

The protein belongs to the NAD(P)-dependent epimerase/dehydratase family. HldD subfamily. Homopentamer. Requires NADP(+) as cofactor.

It catalyses the reaction ADP-D-glycero-beta-D-manno-heptose = ADP-L-glycero-beta-D-manno-heptose. It participates in nucleotide-sugar biosynthesis; ADP-L-glycero-beta-D-manno-heptose biosynthesis; ADP-L-glycero-beta-D-manno-heptose from D-glycero-beta-D-manno-heptose 7-phosphate: step 4/4. In terms of biological role, catalyzes the interconversion between ADP-D-glycero-beta-D-manno-heptose and ADP-L-glycero-beta-D-manno-heptose via an epimerization at carbon 6 of the heptose. This chain is ADP-L-glycero-D-manno-heptose-6-epimerase, found in Syntrophotalea carbinolica (strain DSM 2380 / NBRC 103641 / GraBd1) (Pelobacter carbinolicus).